We begin with the raw amino-acid sequence, 270 residues long: Probable 6-oxopurine nucleoside phosphorylase (270 aa).

Residues S10 and 48-49 (RH) each bind phosphate. M191 provides a ligand contact to substrate. T192 lines the phosphate pocket. A substrate-binding site is contributed by 215–217 (NYA).

The protein belongs to the PNP/MTAP phosphorylase family. MTAP subfamily. In terms of assembly, homohexamer. Dimer of a homotrimer.

The catalysed reaction is a purine D-ribonucleoside + phosphate = a purine nucleobase + alpha-D-ribose 1-phosphate. Its pathway is purine metabolism; purine nucleoside salvage. In terms of biological role, purine nucleoside phosphorylase which is highly specific for 6-oxopurine nucleosides. Cleaves guanosine or inosine to respective bases and sugar-1-phosphate molecules. Involved in purine salvage. The polypeptide is Probable 6-oxopurine nucleoside phosphorylase (Korarchaeum cryptofilum (strain OPF8)).